A 106-amino-acid polypeptide reads, in one-letter code: Nucleoid-associated protein Abu_0429 (106 aa).

The protein belongs to the YbaB/EbfC family. As to quaternary structure, homodimer.

It localises to the cytoplasm. The protein resides in the nucleoid. Binds to DNA and alters its conformation. May be involved in regulation of gene expression, nucleoid organization and DNA protection. This chain is Nucleoid-associated protein Abu_0429, found in Aliarcobacter butzleri (strain RM4018) (Arcobacter butzleri).